The chain runs to 759 residues: Phosphoribosylformylglycinamidine synthase subunit PurL (759 aa).

H46 is an active-site residue. ATP contacts are provided by Y49 and K88. A Mg(2+)-binding site is contributed by E90. Residues 91–94 (SHNH) and R113 contribute to the substrate site. Catalysis depends on H92, which acts as the Proton acceptor. A Mg(2+)-binding site is contributed by D114. Q237 contacts substrate. D265 serves as a coordination point for Mg(2+). 309-311 (ESQ) serves as a coordination point for substrate. Residues D498 and G535 each contribute to the ATP site. N536 provides a ligand contact to Mg(2+). Position 538 (S538) interacts with substrate.

Belongs to the FGAMS family. As to quaternary structure, monomer. Part of the FGAM synthase complex composed of 1 PurL, 1 PurQ and 2 PurS subunits.

The protein resides in the cytoplasm. It catalyses the reaction N(2)-formyl-N(1)-(5-phospho-beta-D-ribosyl)glycinamide + L-glutamine + ATP + H2O = 2-formamido-N(1)-(5-O-phospho-beta-D-ribosyl)acetamidine + L-glutamate + ADP + phosphate + H(+). It participates in purine metabolism; IMP biosynthesis via de novo pathway; 5-amino-1-(5-phospho-D-ribosyl)imidazole from N(2)-formyl-N(1)-(5-phospho-D-ribosyl)glycinamide: step 1/2. Part of the phosphoribosylformylglycinamidine synthase complex involved in the purines biosynthetic pathway. Catalyzes the ATP-dependent conversion of formylglycinamide ribonucleotide (FGAR) and glutamine to yield formylglycinamidine ribonucleotide (FGAM) and glutamate. The FGAM synthase complex is composed of three subunits. PurQ produces an ammonia molecule by converting glutamine to glutamate. PurL transfers the ammonia molecule to FGAR to form FGAM in an ATP-dependent manner. PurS interacts with PurQ and PurL and is thought to assist in the transfer of the ammonia molecule from PurQ to PurL. The chain is Phosphoribosylformylglycinamidine synthase subunit PurL from Anaeromyxobacter dehalogenans (strain 2CP-1 / ATCC BAA-258).